The chain runs to 192 residues: Holliday junction branch migration complex subunit RuvA (192 aa).

A domain I region spans residues 1-64; it reads MLGRLTGLLA…EDAQVLFGFL (64 aa). A domain II region spans residues 65–139; it reads TAPERETFRM…GKLGADLGPA (75 aa). Positions 139 to 143 are flexible linker; it reads AIGGK. The interval 144 to 192 is domain III; that stretch reads PASDAQADILQALIALGYSEREAQAAVKALPAEVGVSDGIKLALKALAR.

It belongs to the RuvA family. As to quaternary structure, homotetramer. Forms an RuvA(8)-RuvB(12)-Holliday junction (HJ) complex. HJ DNA is sandwiched between 2 RuvA tetramers; dsDNA enters through RuvA and exits via RuvB. An RuvB hexamer assembles on each DNA strand where it exits the tetramer. Each RuvB hexamer is contacted by two RuvA subunits (via domain III) on 2 adjacent RuvB subunits; this complex drives branch migration. In the full resolvosome a probable DNA-RuvA(4)-RuvB(12)-RuvC(2) complex forms which resolves the HJ.

It is found in the cytoplasm. The RuvA-RuvB-RuvC complex processes Holliday junction (HJ) DNA during genetic recombination and DNA repair, while the RuvA-RuvB complex plays an important role in the rescue of blocked DNA replication forks via replication fork reversal (RFR). RuvA specifically binds to HJ cruciform DNA, conferring on it an open structure. The RuvB hexamer acts as an ATP-dependent pump, pulling dsDNA into and through the RuvAB complex. HJ branch migration allows RuvC to scan DNA until it finds its consensus sequence, where it cleaves and resolves the cruciform DNA. The polypeptide is Holliday junction branch migration complex subunit RuvA (Methylibium petroleiphilum (strain ATCC BAA-1232 / LMG 22953 / PM1)).